The chain runs to 92 residues: YcgL domain-containing protein Sfri_1738 (92 aa).

A YcgL domain is found at 1–85 (MICAVYKSGR…PQINLLEQHK (85 aa)).

This chain is YcgL domain-containing protein Sfri_1738, found in Shewanella frigidimarina (strain NCIMB 400).